The sequence spans 753 residues: Rsm22-cox11 tandem protein 2, mitochondrial (753 aa).

The N-terminal 39 residues, 1–39, are a transit peptide targeting the mitochondrion; sequence MPILTCRYKILFLYNLRNCFTFQNQRCLIPYGTTTTIRW. [4Fe-4S] cluster-binding residues include Cys323, Cys329, Cys342, and Cys430. The chain crosses the membrane as a helical span at residues 571 to 591; it reads IYYLVAISIFALGLTYAAVPL. Over 592–753 the chain is Mitochondrial intermembrane; the sequence is YRLFCSKTGY…TNGNLLTKLN (162 aa).

It in the N-terminal section; belongs to the methyltransferase superfamily. Rsm22 family. In the C-terminal section; belongs to the COX11/CtaG family. Associates with the mitochondrial ribosome (mitoribosome). Only transiently interacts with the mitoribosome. In terms of processing, specific enzymatic cleavages in vivo by mitochondrial processing peptidase (MPP) yield mature proteins including rsm22-2 and cox11-2.

The protein resides in the mitochondrion. Its subcellular location is the mitochondrion inner membrane. Functionally, mitochondrial ribosome (mitoribosome) assembly factor. Binds at the interface of the head and body domains of the mitochondrial small ribosomal subunit (mt-SSU), occluding the mRNA channel and preventing compaction of the head domain towards the body. Probable inactive methyltransferase: retains the characteristic folding and ability to bind S-adenosyl-L-methionine, but it probably lost its methyltransferase activity. In terms of biological role, exerts its effect at some terminal stage of cytochrome c oxidase synthesis, probably by being involved in the insertion of the copper B into subunit I. The polypeptide is Rsm22-cox11 tandem protein 2, mitochondrial (cox1102) (Schizosaccharomyces pombe (strain 972 / ATCC 24843) (Fission yeast)).